The primary structure comprises 427 residues: Serine--tRNA ligase (427 aa).

233 to 235 contributes to the L-serine binding site; sequence TAE. 264-266 lines the ATP pocket; the sequence is RSE. Residue Glu287 participates in L-serine binding. Residue 351–354 coordinates ATP; the sequence is EISS. Ser387 contributes to the L-serine binding site.

This sequence belongs to the class-II aminoacyl-tRNA synthetase family. Type-1 seryl-tRNA synthetase subfamily. As to quaternary structure, homodimer. The tRNA molecule binds across the dimer.

The protein resides in the cytoplasm. It carries out the reaction tRNA(Ser) + L-serine + ATP = L-seryl-tRNA(Ser) + AMP + diphosphate + H(+). The enzyme catalyses tRNA(Sec) + L-serine + ATP = L-seryl-tRNA(Sec) + AMP + diphosphate + H(+). The protein operates within aminoacyl-tRNA biosynthesis; selenocysteinyl-tRNA(Sec) biosynthesis; L-seryl-tRNA(Sec) from L-serine and tRNA(Sec): step 1/1. In terms of biological role, catalyzes the attachment of serine to tRNA(Ser). Is also able to aminoacylate tRNA(Sec) with serine, to form the misacylated tRNA L-seryl-tRNA(Sec), which will be further converted into selenocysteinyl-tRNA(Sec). The protein is Serine--tRNA ligase of Buchnera aphidicola subsp. Schizaphis graminum (strain Sg).